The chain runs to 285 residues: 2,3,4,5-tetrahydropyridine-2,6-dicarboxylate N-succinyltransferase (285 aa).

Positions 111 and 148 each coordinate substrate.

The protein belongs to the transferase hexapeptide repeat family. In terms of assembly, homotrimer.

The protein resides in the cytoplasm. The catalysed reaction is (S)-2,3,4,5-tetrahydrodipicolinate + succinyl-CoA + H2O = (S)-2-succinylamino-6-oxoheptanedioate + CoA. The protein operates within amino-acid biosynthesis; L-lysine biosynthesis via DAP pathway; LL-2,6-diaminopimelate from (S)-tetrahydrodipicolinate (succinylase route): step 1/3. This chain is 2,3,4,5-tetrahydropyridine-2,6-dicarboxylate N-succinyltransferase, found in Sinorhizobium fredii (strain NBRC 101917 / NGR234).